The following is a 77-amino-acid chain: DNA-directed RNA polymerase subunit epsilon (77 aa).

It belongs to the RNA polymerase subunit epsilon family. As to quaternary structure, RNAP is composed of a core of 2 alpha, a beta and a beta' subunit. The core is associated with a delta subunit, and at least one of epsilon or omega. When a sigma factor is associated with the core the holoenzyme is formed, which can initiate transcription.

It catalyses the reaction RNA(n) + a ribonucleoside 5'-triphosphate = RNA(n+1) + diphosphate. Functionally, a non-essential component of RNA polymerase (RNAP). In Lactobacillus delbrueckii subsp. bulgaricus (strain ATCC 11842 / DSM 20081 / BCRC 10696 / JCM 1002 / NBRC 13953 / NCIMB 11778 / NCTC 12712 / WDCM 00102 / Lb 14), this protein is DNA-directed RNA polymerase subunit epsilon.